The sequence spans 536 residues: DEAD-box ATP-dependent RNA helicase 26 (536 aa).

Positions 1-44 (MMSGGPSDATHRKRRRRRGPKGSGVDGPSIPRAVTTNGAGPEEE) are disordered. Basic residues predominate over residues 11–20 (HRKRRRRRGP). Residues 74 to 102 (TRFDQCPVSPLSLKAIKDAGYEKMTQVQE) carry the Q motif motif. The Helicase ATP-binding domain maps to 105–282 (LPIILQGEDV…HIAMKRGYKF (178 aa)). 118–125 (AKTGTGKT) lines the ATP pocket. The DEAD box motif lies at 230–233 (DEAD). The 151-residue stretch at 316–466 (VLKKHIAEDA…SIQTGVKDAL (151 aa)) folds into the Helicase C-terminal domain.

The protein belongs to the DEAD box helicase family.

The catalysed reaction is ATP + H2O = ADP + phosphate + H(+). The sequence is that of DEAD-box ATP-dependent RNA helicase 26 from Oryza sativa subsp. japonica (Rice).